Here is a 531-residue protein sequence, read N- to C-terminus: Large neutral amino acids transporter small subunit 2 (531 aa).

Residues 1–29 (MEKGARQRNNTAKNHPGSDTSPEAEASSG) are disordered. The Cytoplasmic segment spans residues 1 to 43 (MEKGARQRNNTAKNHPGSDTSPEAEASSGGGGVALKKEIGLVS). A compositionally biased stretch (polar residues) spans 7–21 (QRNNTAKNHPGSDTS). S18, S21, S27, and S28 each carry phosphoserine. A helical transmembrane segment spans residues 44–64 (ACGIIVGNIIGSGIFVSPKGV). Position 52 (I52) interacts with L-leucine. The Extracellular segment spans residues 65 to 72 (LENAGSVG). Residues 73-94 (LALIVWIVTGIITAVGALCYAE) form a helical membrane-spanning segment. Residues 95-115 (LGVTIPKSGGDYSYVKDIFGG) are Cytoplasmic-facing. Residues 116–148 (LAGFLRLWIAVLVIYPTNQAVIALTFSNYVLQP) traverse the membrane as a helical segment. Residue N133 coordinates L-tryptophan. Residues 149–156 (LFPTCFPP) lie on the Extracellular side of the membrane. A helical membrane pass occupies residues 157–177 (ESGLRLLAAICLLLLTWVNCS). The Cytoplasmic segment spans residues 178–180 (SVR). The helical transmembrane segment at 181 to 209 (WATRVQDIFTAGKLLALALIIIMGIVQIC) threads the bilayer. Residues 210–229 (KGEFFWLEPKNAFENFQEPD) lie on the Extracellular side of the membrane. The helical transmembrane segment at 230–251 (IGLVALAFLQGSFAYGGWNFLN) threads the bilayer. An L-leucine-binding site is contributed by G245. Topologically, residues 252-264 (YVTEELVDPYKNL) are cytoplasmic. The helical transmembrane segment at 265–286 (PRAIFISIPLVTFVYVFANIAY) threads the bilayer. Topologically, residues 287-311 (VTAMSPQELLASNAVAVTFGEKLLG) are extracellular. The helical transmembrane segment at 312 to 337 (VMAWIMPISVALSTFGGVNGSLFTSS) threads the bilayer. The Cytoplasmic portion of the chain corresponds to 338-363 (RLFFAGAREGHLPSVLAMIHVKRCTP). Residues 364 to 381 (IPALLFTCLSTLLMLVTS) form a helical membrane-spanning segment. Topologically, residues 382–385 (DMYT) are extracellular. The helical transmembrane segment at 386-407 (LINYVGFINYLFYGVTVAGQIV) threads the bilayer. N394 is an L-tryptophan binding site. Residues 408–422 (LRWKKPDIPRPIKVS) lie on the Cytoplasmic side of the membrane. 2 helical membrane-spanning segments follow: residues 423 to 445 (LLFPIIYLLFWAFLLIFSLWSEP) and 446 to 465 (VVCGIGLAIMLTGVPVYFLG). Over 466–531 (VYWQHKPKCF…VKDPDSEEQP (66 aa)) the chain is Cytoplasmic. Residues 499–531 (NSGAEETTDDLEEQHKPIFKPTPVKDPDSEEQP) form a disordered region. Residue S527 is modified to Phosphoserine.

This sequence belongs to the amino acid-polyamine-organocation (APC) superfamily. L-type amino acid transporter (LAT) (TC 2.A.3.8) family. Disulfide-linked heterodimer composed of the catalytic light chain subunit SLC7A8 and the heavy chain subunit SLC3A2. SLC3A2 acts as a chaperone for correct plasma membrane trafficking and stabilization of SLC7A8 and modulates the substrate affinity and specificity of SLC7A8. ICAM-1 associates with the heterodimer SLC3A2/SLC7A8; facilitates leucine uptake. In terms of tissue distribution, strongly expressed in kidney and small intestine. Moderately present in placenta, ovary and brain. Expressed in the inner ear.

The protein resides in the cell membrane. The protein localises to the basolateral cell membrane. It carries out the reaction L-histidine(in) + L-phenylalanine(out) = L-histidine(out) + L-phenylalanine(in). The catalysed reaction is L-tryptophan(in) + L-phenylalanine(out) = L-tryptophan(out) + L-phenylalanine(in). The enzyme catalyses L-isoleucine(in) + L-phenylalanine(out) = L-isoleucine(out) + L-phenylalanine(in). It catalyses the reaction L-valine(in) + L-phenylalanine(out) = L-valine(out) + L-phenylalanine(in). It carries out the reaction L-leucine(in) + L-phenylalanine(out) = L-leucine(out) + L-phenylalanine(in). The catalysed reaction is L-glutamine(in) + L-phenylalanine(out) = L-glutamine(out) + L-phenylalanine(in). The enzyme catalyses L-cysteine(in) + L-phenylalanine(out) = L-cysteine(out) + L-phenylalanine(in). It catalyses the reaction L-phenylalanine(out) + L-methionine(in) = L-phenylalanine(in) + L-methionine(out). It carries out the reaction L-leucine(out) + L-methionine(in) = L-leucine(in) + L-methionine(out). The catalysed reaction is L-cysteine(out) + L-methionine(in) = L-cysteine(in) + L-methionine(out). The enzyme catalyses S-methylmercury-L-cysteine(out) + L-methionine(in) = S-methylmercury-L-cysteine(in) + L-methionine(out). It catalyses the reaction S-methylmercury-L-cysteine(in) + L-leucine(out) = S-methylmercury-L-cysteine(out) + L-leucine(in). It carries out the reaction S-methylmercury-L-cysteine(in) + L-phenylalanine(out) = S-methylmercury-L-cysteine(out) + L-phenylalanine(in). The catalysed reaction is L-phenylalanine(out) + L-serine(in) = L-phenylalanine(in) + L-serine(out). The enzyme catalyses L-phenylalanine(out) + glycine(in) = L-phenylalanine(in) + glycine(out). It catalyses the reaction L-phenylalanine(out) + L-alanine(in) = L-phenylalanine(in) + L-alanine(out). It carries out the reaction L-tryptophan(in) = L-tryptophan(out). The catalysed reaction is 3,3',5-triiodo-L-thyronine(out) = 3,3',5-triiodo-L-thyronine(in). The enzyme catalyses 3,3'-diiodo-L-thyronine(out) = 3,3'-diiodo-L-thyronine(in). It catalyses the reaction L-dopa(out) + L-phenylalanine(in) = L-dopa(in) + L-phenylalanine(out). Functionally, associates with SLC3A2 to form a functional heterodimeric complex that translocates small and large neutral amino acids with broad specificity and a stoichiometry of 1:1. Functions as amino acid antiporter mediating the influx of extracellular essential amino acids mainly in exchange with the efflux of highly concentrated intracellular amino acids. Has relatively symmetrical selectivities but strongly asymmetrical substrate affinities at both the intracellular and extracellular sides of the transporter. This asymmetry allows SLC7A8 to regulate intracellular amino acid pools (mM concentrations) by exchange with external amino acids (uM concentration range), equilibrating the relative concentrations of different amino acids across the plasma membrane instead of mediating their net uptake. May play an essential role in the reabsorption of neutral amino acids from the epithelial cells to the bloodstream in the kidney. Involved in the uptake of methylmercury (MeHg) when administered as the L-cysteine or D,L-homocysteine complexes, and hence plays a role in metal ion homeostasis and toxicity. Involved in the cellular activity of small molecular weight nitrosothiols, via the stereoselective transport of L-nitrosocysteine (L-CNSO) across the transmembrane. Imports the thyroid hormone diiodothyronine (T2) and to a smaller extent triiodothyronine (T3) but not rT 3 or thyroxine (T4). Mediates the uptake of L-DOPA. May participate in auditory function. This chain is Large neutral amino acids transporter small subunit 2 (Slc7a8), found in Mus musculus (Mouse).